Here is a 197-residue protein sequence, read N- to C-terminus: Wadjet protein JetB (197 aa).

In terms of biological role, component of antiplasmid transformation system Wadjet type I, composed of JetA, JetB, JetC and JetD. Expression of Wadjet type I in B.subtilis (strain BEST7003) reduces the transformation efficiency of plasmid pHCMC05. This Bacillus cereus (strain Q1) protein is Wadjet protein JetB.